We begin with the raw amino-acid sequence, 333 residues long: Fructose-1,6-bisphosphatase class 1 (333 aa).

Residues glutamate 92, aspartate 113, leucine 115, and aspartate 116 each coordinate Mg(2+). Substrate is bound by residues 116 to 119 (DGSS), asparagine 209, tyrosine 242, and lysine 272. Glutamate 278 is a Mg(2+) binding site.

Belongs to the FBPase class 1 family. As to quaternary structure, homotetramer. Mg(2+) serves as cofactor.

The protein resides in the cytoplasm. It carries out the reaction beta-D-fructose 1,6-bisphosphate + H2O = beta-D-fructose 6-phosphate + phosphate. Its pathway is carbohydrate biosynthesis; Calvin cycle. The chain is Fructose-1,6-bisphosphatase class 1 from Chlorobium luteolum (strain DSM 273 / BCRC 81028 / 2530) (Pelodictyon luteolum).